A 402-amino-acid chain; its full sequence is tRNA(Met) cytidine acetate ligase (402 aa).

ATP is bound by residues Ile-7–His-20, Gly-102, Asn-171, and Arg-196.

This sequence belongs to the TmcAL family.

Its subcellular location is the cytoplasm. The enzyme catalyses cytidine(34) in elongator tRNA(Met) + acetate + ATP = N(4)-acetylcytidine(34) in elongator tRNA(Met) + AMP + diphosphate. Catalyzes the formation of N(4)-acetylcytidine (ac(4)C) at the wobble position of elongator tRNA(Met), using acetate and ATP as substrates. First activates an acetate ion to form acetyladenylate (Ac-AMP) and then transfers the acetyl group to tRNA to form ac(4)C34. This Clostridium perfringens (strain ATCC 13124 / DSM 756 / JCM 1290 / NCIMB 6125 / NCTC 8237 / Type A) protein is tRNA(Met) cytidine acetate ligase.